The sequence spans 347 residues: 3-isopropylmalate dehydrogenase (347 aa).

Positions 94, 104, 128, and 219 each coordinate substrate. Residues Asp-219, Asp-243, and Asp-247 each coordinate Mg(2+). Position 279–291 (279–291) interacts with NAD(+); that stretch reads GSAPDIAGQGKAD.

The protein belongs to the isocitrate and isopropylmalate dehydrogenases family. LeuB type 2 subfamily. As to quaternary structure, homodimer. Mg(2+) is required as a cofactor. Requires Mn(2+) as cofactor.

The protein resides in the cytoplasm. It catalyses the reaction (2R,3S)-3-isopropylmalate + NAD(+) = 4-methyl-2-oxopentanoate + CO2 + NADH. The protein operates within amino-acid biosynthesis; L-leucine biosynthesis; L-leucine from 3-methyl-2-oxobutanoate: step 3/4. Its function is as follows. Catalyzes the oxidation of 3-carboxy-2-hydroxy-4-methylpentanoate (3-isopropylmalate) to 3-carboxy-4-methyl-2-oxopentanoate. The product decarboxylates to 4-methyl-2 oxopentanoate. This chain is 3-isopropylmalate dehydrogenase, found in Streptomyces coelicolor (strain ATCC BAA-471 / A3(2) / M145).